A 230-amino-acid chain; its full sequence is Ribonuclease 3 (230 aa).

Positions 5-125 (YSRLYKILGY…IIGAIYLDSD (121 aa)) constitute an RNase III domain. E40 lines the Mg(2+) pocket. The active site involves D44. Residues D111 and E114 each contribute to the Mg(2+) site. E114 is an active-site residue. A DRBM domain is found at 153-223 (DSKSKLQEIL…AEKMIQILSQ (71 aa)).

The protein belongs to the ribonuclease III family. As to quaternary structure, homodimer. Requires Mg(2+) as cofactor.

It localises to the cytoplasm. It carries out the reaction Endonucleolytic cleavage to 5'-phosphomonoester.. Its function is as follows. Digests double-stranded RNA. Involved in the processing of primary rRNA transcript to yield the immediate precursors to the large and small rRNAs (23S and 16S). Processes some mRNAs, and tRNAs when they are encoded in the rRNA operon. Processes pre-crRNA and tracrRNA of type II CRISPR loci if present in the organism. This is Ribonuclease 3 from Francisella philomiragia subsp. philomiragia (strain ATCC 25017 / CCUG 19701 / FSC 153 / O#319-036).